The chain runs to 152 residues: Antiholin-like protein LrgA (152 aa).

4 helical membrane-spanning segments follow: residues 23 to 43, 45 to 65, 77 to 97, and 108 to 128; these read YSIF…KIIE, FMPI…IALC, VGTA…ISVI, and ILII…TGFS.

This sequence belongs to the CidA/LrgA family. LrgA subfamily.

Its subcellular location is the cell membrane. Functionally, inhibits the expression or activity of extracellular murein hydrolases by interacting, possibly with LrgB, with the holin-like proteins CidA and/or CidB. The LrgAB and CidAB proteins may affect the proton motive force of the membrane. May be involved in programmed cell death (PCD), possibly triggering PCD in response to antibiotics and environmental stresses. The protein is Antiholin-like protein LrgA of Staphylococcus epidermidis (strain ATCC 12228 / FDA PCI 1200).